The chain runs to 300 residues: GTPase Era (300 aa).

The 169-residue stretch at 8–176 (RCGYVAIVGR…ERLVAGRLPQ (169 aa)) folds into the Era-type G domain. The interval 16 to 23 (GRPNVGKS) is G1. 16–23 (GRPNVGKS) is a binding site for GTP. The interval 42–46 (QTTRH) is G2. Residues 63–66 (DTPG) form a G3 region. GTP is bound by residues 63-67 (DTPGL) and 125-128 (NKAD). Positions 125–128 (NKAD) are G4. A G5 region spans residues 155 to 157 (ISA). A KH type-2 domain is found at 199–283 (VREKIMRQLG…MLNLWVKVKG (85 aa)).

The protein belongs to the TRAFAC class TrmE-Era-EngA-EngB-Septin-like GTPase superfamily. Era GTPase family. As to quaternary structure, monomer.

It localises to the cytoplasm. The protein localises to the cell inner membrane. In terms of biological role, an essential GTPase that binds both GDP and GTP, with rapid nucleotide exchange. Plays a role in 16S rRNA processing and 30S ribosomal subunit biogenesis and possibly also in cell cycle regulation and energy metabolism. In Azotobacter vinelandii (strain DJ / ATCC BAA-1303), this protein is GTPase Era.